The sequence spans 109 residues: MMRGGMGNMNNMMKQMQKMQKDMAKAQEELGEKTVEGTAGGGMITVIANGHKQILEVKIKEEVVDPEDIEMLQDLVLAATNDALKKADELSNSTMGKFTKGLNLPGGMF.

This sequence belongs to the YbaB/EbfC family. As to quaternary structure, homodimer.

It localises to the cytoplasm. It is found in the nucleoid. Binds to DNA and alters its conformation. May be involved in regulation of gene expression, nucleoid organization and DNA protection. This Bacillus cereus (strain B4264) protein is Nucleoid-associated protein BCB4264_A0025.